The sequence spans 181 residues: Ribulose bisphosphate carboxylase small subunit, chloroplastic 1 (181 aa).

Residues 1–57 constitute a chloroplast transit peptide; sequence MASSIVSSAAVATRSNVAQASMVAPFTGLKSAASFPVTKKNNNVDITSLASNGGRVR.

It belongs to the RuBisCO small chain family. In terms of assembly, heterohexadecamer of 8 large and 8 small subunits.

It is found in the plastid. It localises to the chloroplast. Its function is as follows. RuBisCO catalyzes two reactions: the carboxylation of D-ribulose 1,5-bisphosphate, the primary event in carbon dioxide fixation, as well as the oxidative fragmentation of the pentose substrate. Both reactions occur simultaneously and in competition at the same active site. Although the small subunit is not catalytic it is essential for maximal activity. This Solanum tuberosum (Potato) protein is Ribulose bisphosphate carboxylase small subunit, chloroplastic 1.